Consider the following 363-residue polypeptide: 3-isopropylmalate dehydrogenase (363 aa).

Gly78 to Glu91 is an NAD(+) binding site. Positions 99, 109, 138, and 227 each coordinate substrate. 3 residues coordinate Mg(2+): Asp227, Asp251, and Asp255. Gly285–Asn297 is a binding site for NAD(+).

Belongs to the isocitrate and isopropylmalate dehydrogenases family. LeuB type 1 subfamily. As to quaternary structure, homodimer. The cofactor is Mg(2+). Requires Mn(2+) as cofactor.

The protein localises to the cytoplasm. The catalysed reaction is (2R,3S)-3-isopropylmalate + NAD(+) = 4-methyl-2-oxopentanoate + CO2 + NADH. It functions in the pathway amino-acid biosynthesis; L-leucine biosynthesis; L-leucine from 3-methyl-2-oxobutanoate: step 3/4. Its function is as follows. Catalyzes the oxidation of 3-carboxy-2-hydroxy-4-methylpentanoate (3-isopropylmalate) to 3-carboxy-4-methyl-2-oxopentanoate. The product decarboxylates to 4-methyl-2 oxopentanoate. This chain is 3-isopropylmalate dehydrogenase, found in Salmonella paratyphi A (strain ATCC 9150 / SARB42).